A 158-amino-acid polypeptide reads, in one-letter code: uncharacterized protein (158 aa).

The first 30 residues, 1-30 (MNKKFLKCGTLFLISCSILGSTIPAVTVFS), serve as a signal peptide directing secretion.

This is an uncharacterized protein from Streptococcus pneumoniae serotype 2 (strain D39 / NCTC 7466).